Consider the following 62-residue polypeptide: Glucagon (62 aa).

Belongs to the glucagon family.

It is found in the secreted. In terms of biological role, promotes hydrolysis of glycogen and lipids, and raises the blood sugar level. In Scyliorhinus canicula (Small-spotted catshark), this protein is Glucagon (gcg).